Reading from the N-terminus, the 2871-residue chain is Desmoplakin (2871 aa).

An interaction with PKP1, JUP, PKP2 region spans residues 1–584; that stretch reads MSCNGGSHPR…DYMKTIADLE (584 aa). The interval 1 to 1056 is globular 1; the sequence is MSCNGGSHPR…ANSENCNKNK (1056 aa). Residues S22 and S53 each carry the phosphoserine modification. Y56 carries the post-translational modification Phosphotyrosine. T61 bears the Phosphothreonine mark. Residues S165, S166, and S176 each carry the phosphoserine modification. Spectrin repeat units follow at residues 178–271 and 272–375; these read SGWD…HLRQ and LQNI…LKEN. A Spectrin 3a repeat occupies 376–446; the sequence is AAYFQFFEEA…NLVNKSKKIV (71 aa). An SH3 domain is found at 458-515; that stretch reads NKPIILRALCDYKQDQKIVHKGDECILKDNNERSKWYVTGPGGVDMLVPSVGLIIPPP. The Spectrin 3b repeat unit spans residues 516–545; sequence NPLAVDLSCKIEQYYEAILALWNQLYINMK. Spectrin repeat units follow at residues 546–627, 654–769, and 770–883; these read SLVS…IQLP, VIET…SLCT, and VRAL…DLEK. A coiled-coil region spans residues 1018–1945; sequence SEMLKSLEDL…QREIDKLRQR (928 aa). The segment at 1057 to 1945 is central fibrous rod domain; the sequence is FLDQNLQKYQ…QREIDKLRQR (889 aa). Residues S1658, S1708, and S2024 each carry the phosphoserine modification. Residues 1946-2871 are globular 2; sequence PYGSHRETQT…YSFSSSSIGH (926 aa). Residues 1960-2208 are 4.5 X 38 AA tandem repeats (Domain A); the sequence is TVDTSKLVFD…LLLSVQKRSM (249 aa). 17 Plectin repeats span residues 2009–2045, 2046–2083, 2084–2121, 2122–2159, 2163–2197, 2198–2233, 2251–2288, 2289–2326, 2327–2364, 2365–2402, 2406–2440, 2456–2493, 2507–2544, 2610–2647, 2648–2685, 2724–2761, and 2762–2799; these read QPFL…PEST, VMLL…FDDR, QQIY…RETG, MRLL…RDLY, NDPR…PHTG, LLLL…PSTV, KDFL…PGTA, LELL…IEFK, EKLL…KGHG, IRLL…EELS, SDPS…EETG, SQKN…YETF, TITG…RKFF, SDTL…SITG, QRLL…QDMA, QRFL…GRAA, and QRLQ…DITG. 3 positions are modified to phosphoserine: S2207, S2209, and S2225. The segment at 2244-2446 is 4.5 X 38 AA tandem repeats (Domain B); the sequence is DEVGERIKDF…EETGLCLLPL (203 aa). Residues 2609–2822 are 4.5 X 38 AA tandem repeats (Domain C); the sequence is FSDTLEESSP…LPSPYNMSSA (214 aa). Phosphoserine is present on residues S2810 and S2815. The span at 2810 to 2823 shows a compositional bias: polar residues; it reads SKGLPSPYNMSSAP. The tract at residues 2810 to 2871 is disordered; that stretch reads SKGLPSPYNM…YSFSSSSIGH (62 aa). At Y2817 the chain carries Phosphotyrosine. Phosphoserine is present on residues S2820, S2821, and S2825. A 6 X 4 AA tandem repeats of G-S-R-[SR] region spans residues 2824–2847; that stretch reads GSRSGSRSGSRSGSRSGSRSGSRR. Residues 2824-2847 are compositionally biased toward low complexity; that stretch reads GSRSGSRSGSRSGSRSGSRSGSRR. Omega-N-methylarginine occurs at positions 2826 and 2847. A Phosphoserine modification is found at S2849. At T2853 the chain carries Phosphothreonine. The segment covering 2856-2871 has biased composition (low complexity); that stretch reads SSYSYSYSFSSSSIGH. A Phosphoserine modification is found at S2868.

It belongs to the plakin or cytolinker family. In terms of assembly, homodimer. Interacts with COL17A1 (via cytoplasmic region). Interacts with DSC2. Interacts with PKP2. Interacts with PKP1. Interacts weakly with TMEM65. Post-translationally, phosphorylation at Ser-2849 increases association with intermediate filament cytokeratin, potentially facilitating interaction between desmosome junctions and intermediate filament architecture. Expressed in oral mucosa (at protein level). Expressed in arrector pili muscle (at protein level). Expressed in the heart in the heart (at protein level). As to expression, apparently an obligate constituent of all desmosomes. In terms of tissue distribution, resides predominantly in tissues and cells of stratified origin.

The protein localises to the cell junction. The protein resides in the desmosome. Its subcellular location is the cell membrane. It localises to the cytoplasm. In terms of biological role, major high molecular weight protein of desmosomes. Regulates profibrotic gene expression in cardiomyocytes via activation of the MAPK14/p38 MAPK signaling cascade and increase in TGFB1 protein abundance. The sequence is that of Desmoplakin (DSP) from Homo sapiens (Human).